A 247-amino-acid chain; its full sequence is Carboxy-S-adenosyl-L-methionine synthase (247 aa).

S-adenosyl-L-methionine contacts are provided by residues Tyr39, 64–66 (GCS), 89–90 (DN), 117–118 (DI), Asn132, and Arg199.

The protein belongs to the class I-like SAM-binding methyltransferase superfamily. Cx-SAM synthase family. Homodimer.

The catalysed reaction is prephenate + S-adenosyl-L-methionine = carboxy-S-adenosyl-L-methionine + 3-phenylpyruvate + H2O. Functionally, catalyzes the conversion of S-adenosyl-L-methionine (SAM) to carboxy-S-adenosyl-L-methionine (Cx-SAM). In Escherichia coli O127:H6 (strain E2348/69 / EPEC), this protein is Carboxy-S-adenosyl-L-methionine synthase.